The chain runs to 515 residues: DEP domain-containing protein 7 (515 aa).

The region spanning 27–118 (LQTQVEVKRR…SSCSLYRFLN (92 aa)) is the DEP domain. Residues 121–144 (TPSTSGSETIGSGYNTQRNTNSPP) show a composition bias toward polar residues. Positions 121–160 (TPSTSGSETIGSGYNTQRNTNSPPFQRMEDSAYSNNSPVK) are disordered.

Belongs to the DEPDC7 family.

This chain is DEP domain-containing protein 7 (depdc7), found in Danio rerio (Zebrafish).